The primary structure comprises 270 residues: uncharacterized protein (270 aa).

Disordered regions lie at residues methionine 1 to proline 21 and proline 53 to asparagine 77. The segment covering serine 58–lysine 75 has biased composition (basic and acidic residues). Residues glutamate 182–glutamate 270 are a coiled coil.

This is an uncharacterized protein from Plasmodium falciparum (isolate 3D7).